The primary structure comprises 474 residues: Viral protein TPX (474 aa).

Positions 268-474 (VTVTPISSPS…TPTSTTSSNI (207 aa)) are disordered. The span at 275 to 365 (SPSPTPTPTP…PTPTPTPTPT (91 aa)) shows a compositional bias: pro residues. The stretch at 278 to 367 (PTPTPTPTPT…PTPTPTPTPT (90 aa)) is one Thr-Pro(N) repeat. Residues 278-467 (PTPTPTPTPT…PTPTPTPTPT (190 aa)) are 3 Thr-Pro repeats regions and two near identical repeats. The segment at residues 368-377 (YDITYVVFDV) is a repeat. The Thr-Pro(N) repeat unit spans residues 378 to 436 (TPSPTPTPTPTPTPTPTPTPTPTPTPTPTPTPTPTPTPTPTPTPTPTPTPTPTPTPTPT). Residues 380 to 434 (SPTPTPTPTPTPTPTPTPTPTPTPTPTPTPTPTPTPTPTPTPTPTPTPTPTPTPT) are compositionally biased toward pro residues. The segment at residues 437–446 (YDITYVIFDV) is a repeat. One copy of the Thr-Pro(N) repeat lies at 447–467 (TPSPTPTPTPTPTPTPTPTPT). Positions 449 to 465 (SPTPTPTPTPTPTPTPT) are enriched in pro residues.

The chain is Viral protein TPX from Thermoproteus tenax virus 1 (strain VT3) (TTV1).